The following is a 421-amino-acid chain: Subtilisin-like protease 2 (421 aa).

The signal sequence occupies residues 1–16 (MQLLNFGLLLLPFVAG). Positions 17-122 (DLAPQPEPLL…VHPDQHFYLA (106 aa)) are excised as a propeptide. The Inhibitor I9 domain occupies 36–121 (QYLVTLKEGL…SVHPDQHFYL (86 aa)). In terms of domain architecture, Peptidase S8 spans 131–421 (RWGLGYMSSK…ERKCKLPKYY (291 aa)). The Charge relay system role is filled by Asp-169. Asn-192 carries an N-linked (GlcNAc...) asparagine glycan. The active-site Charge relay system is His-201. Residues Asn-248, Asn-261, and Asn-348 are each glycosylated (N-linked (GlcNAc...) asparagine). Ser-357 acts as the Charge relay system in catalysis. A glycan (N-linked (GlcNAc...) asparagine) is linked at Asn-388.

This sequence belongs to the peptidase S8 family.

It is found in the secreted. Its function is as follows. Secreted subtilisin-like serine protease with keratinolytic activity that contributes to pathogenicity. This is Subtilisin-like protease 2 (SUB2) from Trichophyton rubrum (Athlete's foot fungus).